A 55-amino-acid polypeptide reads, in one-letter code: GQQPLCNDCFACARSLCICGDLVPQCHEGCQQCEKVDTGKPLYQCRSFEDYQCAN.

Intrachain disulfides connect Cys6-Cys53, Cys12-Cys17, Cys26-Cys33, and Cys30-Cys45.

It belongs to the Bowman-Birk serine protease inhibitor family. In terms of tissue distribution, expressed in bulb (at protein level).

In terms of biological role, serine protease inhibitor. Weakly inhibits trypsin (Ki = 167 nM). Does not inhibit bacterial subtilisin or mamallian chymotrypsin. This is Bowman-Birk type proteinase inhibitor B1 from Hyacinthus orientalis (Common hyacinth).